A 263-amino-acid chain; its full sequence is Probable ribosomal RNA small subunit methyltransferase A (263 aa).

Positions 12, 37, 58, 83, and 100 each coordinate S-adenosyl-L-methionine.

This sequence belongs to the class I-like SAM-binding methyltransferase superfamily. rRNA adenine N(6)-methyltransferase family. RsmA subfamily.

It localises to the cytoplasm. Functionally, specifically dimethylates two adjacent adenosines in the loop of a conserved hairpin near the 3'-end of 16S rRNA in the 30S particle. May play a critical role in biogenesis of 30S subunits. This chain is Probable ribosomal RNA small subunit methyltransferase A, found in Methanococcus maripaludis (strain C7 / ATCC BAA-1331).